The chain runs to 377 residues: Cytochrome c peroxidase, mitochondrial (377 aa).

Residues methionine 1–phenylalanine 32 constitute a mitochondrion transit peptide. Histidine 138 (proton acceptor) is an active-site residue. Histidine 261 contacts heme b. Tryptophan 277 (tryptophan radical intermediate) is an active-site residue.

It belongs to the peroxidase family. Cytochrome c peroxidase subfamily. In terms of assembly, forms a one-to-one complex with cytochrome c. Interacts with MID1 (via C-terminus); the interaction may contribute to cellular detoxification of radicals. Requires heme b as cofactor.

Its subcellular location is the mitochondrion matrix. The protein localises to the mitochondrion intermembrane space. It catalyses the reaction 2 Fe(II)-[cytochrome c] + H2O2 + 2 H(+) = 2 Fe(III)-[cytochrome c] + 2 H2O. Destroys radicals which are normally produced within the cells and which are toxic to biological systems. The sequence is that of Cytochrome c peroxidase, mitochondrial (CCP1) from Cryptococcus neoformans var. grubii serotype A (strain H99 / ATCC 208821 / CBS 10515 / FGSC 9487) (Filobasidiella neoformans var. grubii).